The following is a 508-amino-acid chain: Aspartyl/glutamyl-tRNA(Asn/Gln) amidotransferase subunit B (508 aa).

It belongs to the GatB/GatE family. GatB subfamily. As to quaternary structure, heterotrimer of A, B and C subunits.

The catalysed reaction is L-glutamyl-tRNA(Gln) + L-glutamine + ATP + H2O = L-glutaminyl-tRNA(Gln) + L-glutamate + ADP + phosphate + H(+). It catalyses the reaction L-aspartyl-tRNA(Asn) + L-glutamine + ATP + H2O = L-asparaginyl-tRNA(Asn) + L-glutamate + ADP + phosphate + 2 H(+). Allows the formation of correctly charged Asn-tRNA(Asn) or Gln-tRNA(Gln) through the transamidation of misacylated Asp-tRNA(Asn) or Glu-tRNA(Gln) in organisms which lack either or both of asparaginyl-tRNA or glutaminyl-tRNA synthetases. The reaction takes place in the presence of glutamine and ATP through an activated phospho-Asp-tRNA(Asn) or phospho-Glu-tRNA(Gln). In Salinibacter ruber (strain DSM 13855 / M31), this protein is Aspartyl/glutamyl-tRNA(Asn/Gln) amidotransferase subunit B.